The following is a 574-amino-acid chain: Membrane protein insertase YidC (574 aa).

Residues 6-26 (VFLIFAWLMVAALLWMEWGKE) traverse the membrane as a helical segment. A disordered region spans residues 65 to 85 (QAGAPGKVPATSTTTATPAAA). Helical transmembrane passes span 350-370 (VIDY…FWVL), 376-396 (FLHN…LVLY), 447-467 (GGCL…WVLV), 491-511 (FILP…TPTP), and 525-545 (PLVF…YWVV).

This sequence belongs to the OXA1/ALB3/YidC family. Type 1 subfamily. As to quaternary structure, interacts with the Sec translocase complex via SecD. Specifically interacts with transmembrane segments of nascent integral membrane proteins during membrane integration.

It localises to the cell inner membrane. In terms of biological role, required for the insertion and/or proper folding and/or complex formation of integral membrane proteins into the membrane. Involved in integration of membrane proteins that insert both dependently and independently of the Sec translocase complex, as well as at least some lipoproteins. Aids folding of multispanning membrane proteins. The sequence is that of Membrane protein insertase YidC from Xanthomonas oryzae pv. oryzae (strain PXO99A).